The following is a 74-amino-acid chain: U-actitoxin-Bgr3a (74 aa).

A signal peptide spans 1–21 (MSAQRFLFLLVVTSLIAASLA). Positions 22–29 (APKDVQLT) are excised as a propeptide. Disulfide bonds link cysteine 35-cysteine 68, cysteine 37-cysteine 61, and cysteine 51-cysteine 69.

Belongs to the sea anemone type 3 (BDS) potassium channel toxin family.

It localises to the secreted. The protein localises to the nematocyst. Potently and selectively inhibits voltage-gated potassium channels Kv11/KCNH/ERG. Acts as a gating-modifier toxin that shifts the voltage-dependence of ERG activation in the positive direction and suppresses its current amplitudes elicited by strong depolarizing pulses that maximally activate the channels. This chain is U-actitoxin-Bgr3a, found in Bunodosoma granuliferum (Red warty sea anemone).